The sequence spans 301 residues: Probable aspartoacylase (301 aa).

Residues histidine 13 and glutamate 16 each contribute to the Zn(2+) site. Residues arginine 54 and 61–62 (NR) contribute to the substrate site. Histidine 105 lines the Zn(2+) pocket. Residues glutamate 163 and tyrosine 273 each contribute to the substrate site.

Belongs to the AspA/AstE family. Aspartoacylase subfamily. Zn(2+) is required as a cofactor.

It catalyses the reaction an N-acyl-L-aspartate + H2O = a carboxylate + L-aspartate. The sequence is that of Probable aspartoacylase from Prochlorococcus marinus (strain AS9601).